The following is a 347-amino-acid chain: Isopentenyl-diphosphate delta-isomerase (347 aa).

11-12 contacts substrate; it reads RK. Residues 72–74, S102, and N131 contribute to the FMN site; that span reads AMT. Residue Q161 participates in substrate binding. Residue E162 participates in Mg(2+) binding. Residues K192, T222, and 287 to 288 each bind FMN; that span reads AG.

Belongs to the IPP isomerase type 2 family. Homooctamer. Dimer of tetramers. It depends on FMN as a cofactor. Requires NADPH as cofactor. Mg(2+) serves as cofactor.

It is found in the cytoplasm. It carries out the reaction isopentenyl diphosphate = dimethylallyl diphosphate. Functionally, involved in the biosynthesis of isoprenoids. Catalyzes the 1,3-allylic rearrangement of the homoallylic substrate isopentenyl (IPP) to its allylic isomer, dimethylallyl diphosphate (DMAPP). The chain is Isopentenyl-diphosphate delta-isomerase from Lactococcus lactis subsp. lactis (strain IL1403) (Streptococcus lactis).